The primary structure comprises 1700 residues: Balbiani ring protein 3 (1700 aa).

An N-terminal signal peptide occupies residues 1 to 20 (MKTLSSLLLVLAVNVLLIQA).

Salivary gland.

Its subcellular location is the secreted. Functionally, used by the larvae to construct a supramolecular structure, the larval tube. Balbiani ring protein 3 could play a role as a transport protein that binds to other proteins intracellularly and in the gland lumen in order to prevent these from forming water-insoluble fibers too early. In Chironomus tentans (Midge), this protein is Balbiani ring protein 3 (BR3).